The sequence spans 116 residues: uncharacterized protein (116 aa).

Residues 5–23 (LLAVETWYMLILSFRFLFF) traverse the membrane as a helical segment.

Its subcellular location is the membrane. This is an uncharacterized protein from Saccharomyces cerevisiae (strain ATCC 204508 / S288c) (Baker's yeast).